We begin with the raw amino-acid sequence, 158 residues long: SsrA-binding protein (158 aa).

It belongs to the SmpB family.

Its subcellular location is the cytoplasm. In terms of biological role, required for rescue of stalled ribosomes mediated by trans-translation. Binds to transfer-messenger RNA (tmRNA), required for stable association of tmRNA with ribosomes. tmRNA and SmpB together mimic tRNA shape, replacing the anticodon stem-loop with SmpB. tmRNA is encoded by the ssrA gene; the 2 termini fold to resemble tRNA(Ala) and it encodes a 'tag peptide', a short internal open reading frame. During trans-translation Ala-aminoacylated tmRNA acts like a tRNA, entering the A-site of stalled ribosomes, displacing the stalled mRNA. The ribosome then switches to translate the ORF on the tmRNA; the nascent peptide is terminated with the 'tag peptide' encoded by the tmRNA and targeted for degradation. The ribosome is freed to recommence translation, which seems to be the essential function of trans-translation. The chain is SsrA-binding protein from Roseiflexus sp. (strain RS-1).